Reading from the N-terminus, the 433-residue chain is Glutamate-1-semialdehyde 2,1-aminomutase (433 aa).

At Lys-271 the chain carries N6-(pyridoxal phosphate)lysine.

The protein belongs to the class-III pyridoxal-phosphate-dependent aminotransferase family. HemL subfamily. Homodimer. Pyridoxal 5'-phosphate serves as cofactor.

The protein localises to the cytoplasm. It carries out the reaction (S)-4-amino-5-oxopentanoate = 5-aminolevulinate. Its pathway is porphyrin-containing compound metabolism; protoporphyrin-IX biosynthesis; 5-aminolevulinate from L-glutamyl-tRNA(Glu): step 2/2. It functions in the pathway porphyrin-containing compound metabolism; chlorophyll biosynthesis. The chain is Glutamate-1-semialdehyde 2,1-aminomutase from Prochlorococcus marinus (strain MIT 9301).